A 163-amino-acid chain; its full sequence is Probable ribosome biogenesis protein RLP24 (163 aa).

The protein belongs to the eukaryotic ribosomal protein eL24 family. In terms of assembly, associated with nucleolar and cytoplasmic pre-60S particles. At the end of biogenesis it dissociates from cytoplasmic pre-60S particles and is likely to be exchanged for its ribosomal homolog, RPL24.

The protein localises to the nucleus. The protein resides in the nucleolus. Its function is as follows. Involved in the biogenesis of the 60S ribosomal subunit. Ensures the docking of GTPBP4/NOG1 to pre-60S particles. The protein is Probable ribosome biogenesis protein RLP24 (RSL24D1) of Pongo abelii (Sumatran orangutan).